The following is a 666-amino-acid chain: Mitogen-activated protein kinase kinase kinase ANP1 (666 aa).

A Protein kinase domain is found at 69 to 331; it reads WRKGQLIGRG…ASELLKHPFV (263 aa). Residues 75–83 and lysine 98 each bind ATP; that span reads IGRGAFGTV. Residues 101–131 are a coiled coil; the sequence is LIAANFASKEKTQAHIQELEEEVKLLKNLSH. Residues lysine 109 and lysine 111 each participate in a glycyl lysine isopeptide (Lys-Gly) (interchain with G-Cter in ubiquitin) cross-link. The active-site Proton acceptor is the aspartate 197. The span at 452-464 shows a compositional bias: basic and acidic residues; the sequence is KFDESPGNGEKES. Disordered stretches follow at residues 452–481, 536–592, and 635–666; these read KFDESPGNGEKESTMSMECDQPSYSEDDDE, GFLK…DGVS, and QEIMRQAGLGSSPRDRGMSRQREKSRFASPGK. Positions 538 to 558 are enriched in low complexity; sequence LKLPPKSRSPSRGPLGGSPSR. Positions 560 to 569 are enriched in polar residues; that stretch reads TDATSCSKSP. Positions 620-643 form a coiled coil; it reads KKWKEELDQELERKRQEIMRQAGL. The segment covering 647–660 has biased composition (basic and acidic residues); sequence PRDRGMSRQREKSR.

The protein belongs to the protein kinase superfamily. STE Ser/Thr protein kinase family. MAP kinase kinase kinase subfamily. In terms of tissue distribution, expressed in roots, inflorescence stems, flower buds and flowers. Low amount in rosette and cauline leaves.

The catalysed reaction is L-seryl-[protein] + ATP = O-phospho-L-seryl-[protein] + ADP + H(+). It catalyses the reaction L-threonyl-[protein] + ATP = O-phospho-L-threonyl-[protein] + ADP + H(+). Its function is as follows. May be involved in an oxidative stress-mediated signaling cascade that phosphorylates downstream MAP kinases MPK3 and MPK6. May suppress auxin signaling that promotes cell cycle. Functionally redundant to ANP2 and ANP3 in the positive regulation of cytokinesis. This Arabidopsis thaliana (Mouse-ear cress) protein is Mitogen-activated protein kinase kinase kinase ANP1 (ANP1).